We begin with the raw amino-acid sequence, 498 residues long: MNYFPWLTTVVILPIVGGSLIFLFPHKGNKVIKWYTICICLIDLLITSYVFCYHFELDDPLIQLTENYKWINFFDFYWSFGIDGLSLGPILLTGFITTLATLAAQPVTRESKLFYFLMLAMYSGQIGTFSSQDILLFFIMWEFELIPVYLLLSMWGGKKRLYSATKFILYTAGSSVFLLLGILGMSFYSSNEPTLNFESLTNQSYPVALEIIFYIGFLIAFAVKSPIIPLHTWLPDTHGEAHYSTCMLLAGILLKMGAYGLVRINMEFLSRAHSIFSPWLILLGSIQIIYAASTSLGQRNLKKRIAYSSVSHMGFLLLGIGSISDTGLNGAILQIISHGFIGAALFFLAGTSYDRLRLLYLDEMGGMAIPMPKIFTVFTILSMASLALPGMSGFVAELIVLLGIITSQKYLLITKILITFVTAIGMILTPIYSLSMLRQMFYGYKLFNTPNSYFFDSGPRELFISISILIPVISIGIYPDFIFSFSADKVEAILSNFL.

Helical transmembrane passes span 4 to 24 (FPWL…IFLF), 31 to 51 (VIKW…SYVF), 76 to 96 (FYWS…TGFI), 113 to 130 (LFYF…GTFS), 134 to 154 (ILLF…LLSM), 167 to 187 (FILY…GMSF), 208 to 228 (ALEI…SPII), 242 to 262 (HYST…YGLV), 272 to 292 (AHSI…IYAA), 305 to 325 (IAYS…SISD), 330 to 350 (GAIL…FLAG), 386 to 406 (LALP…GIIT), 411 to 431 (LLIT…LTPI), and 463 to 483 (FISI…DFIF).

This sequence belongs to the complex I subunit 4 family.

It is found in the plastid. The protein localises to the chloroplast thylakoid membrane. It catalyses the reaction a plastoquinone + NADH + (n+1) H(+)(in) = a plastoquinol + NAD(+) + n H(+)(out). The catalysed reaction is a plastoquinone + NADPH + (n+1) H(+)(in) = a plastoquinol + NADP(+) + n H(+)(out). The chain is NAD(P)H-quinone oxidoreductase chain 4, chloroplastic from Glycine max (Soybean).